The sequence spans 114 residues: Large ribosomal subunit protein bL19 (114 aa).

Belongs to the bacterial ribosomal protein bL19 family.

In terms of biological role, this protein is located at the 30S-50S ribosomal subunit interface and may play a role in the structure and function of the aminoacyl-tRNA binding site. This chain is Large ribosomal subunit protein bL19, found in Clostridium botulinum (strain ATCC 19397 / Type A).